We begin with the raw amino-acid sequence, 360 residues long: DNA replication and repair protein RecF (360 aa).

30-37 (GQNGSGKT) contributes to the ATP binding site.

The protein belongs to the RecF family.

Its subcellular location is the cytoplasm. The RecF protein is involved in DNA metabolism; it is required for DNA replication and normal SOS inducibility. RecF binds preferentially to single-stranded, linear DNA. It also seems to bind ATP. This chain is DNA replication and repair protein RecF, found in Shewanella loihica (strain ATCC BAA-1088 / PV-4).